A 245-amino-acid polypeptide reads, in one-letter code: MRQRRSVVAVSVKPKGFKLGHKQGSMSTTSPPPSSPDGNVSTSGPSAIKLSKNWELPQRLKPGRKPKSKRGDASANNDGSSKIKKVQTSNQKDQMTTKDHENEGAKGHEGKSDDEGNGSGDENGVDSVEKRRRQNRDAQRAYRERRTTRIQVLEEKVEMLHNLVDDWQRKYKLLESEFSDTKENLQKSIALNNELQKALPLIVNTPFQQQPENPPDNPISILEMVENFKPIGAVSLKKGKLKAHC.

The tract at residues 1–144 is disordered; sequence MRQRRSVVAV…NRDAQRAYRE (144 aa). Residues 74–94 are compositionally biased toward polar residues; it reads SANNDGSSKIKKVQTSNQKDQ. 2 stretches are compositionally biased toward basic and acidic residues: residues 95–114 and 135–144; these read MTTK…KSDD and NRDAQRAYRE. The 64-residue stretch at 125 to 188 folds into the bZIP domain; it reads VDSVEKRRRQ…SDTKENLQKS (64 aa). The tract at residues 130-149 is basic motif; sequence KRRRQNRDAQRAYRERRTTR. The leucine-zipper stretch occupies residues 153–181; that stretch reads LEEKVEMLHNLVDDWQRKYKLLESEFSDT.

Belongs to the bZIP family. YAP subfamily. In terms of assembly, homodimer.

Its subcellular location is the nucleus. In terms of biological role, probable transcription activator linked to cell cycle that induces transcription activation of genes in the environmental stress response and metabolism control pathways, like the closely related YAP5. This is AP-1-like transcription factor YAP7 (YAP7) from Saccharomyces cerevisiae (strain ATCC 204508 / S288c) (Baker's yeast).